A 333-amino-acid polypeptide reads, in one-letter code: MEEPPEGHGHHRDAAPPGPANGGGGGGGGSDGDSAPVSPSPAPASPAAPCPLPLPRRRPPPPPPPRTTNFFIDNILRPDFGCKKEPPAATGAATGAGGGGGGGGREQRDGAQSAGRENVNPLLARPPHAPSSALLCPDSNCAPDGSAPAGTAAKANPGTAAGAAGAAGAAKAQGDGGETPAAKYGEHGSPAILLMGSNNGGAVLKPDSQQPLVWPAWVYCTRYSDRPSSPRTRKLKKKKTEKEDKRPRTAFTAEQLQRLKAEFQANRYITEQRRQSLAQELSLNESRVKIWFQNKRAKIKKATGIKNGLALHLMAQGLYNHSTTTVQDKEESE.

Basic and acidic residues predominate over residues 1 to 14 (MEEPPEGHGHHRDA). Disordered stretches follow at residues 1–184 (MEEP…AAKY) and 226–247 (RPSS…DKRP). Gly residues predominate over residues 20 to 31 (ANGGGGGGGGSD). Residues 38 to 66 (SPSPAPASPAAPCPLPLPRRRPPPPPPPR) show a composition bias toward pro residues. The segment covering 94–104 (TGAGGGGGGGG) has biased composition (gly residues). Low complexity predominate over residues 144–173 (DGSAPAGTAAKANPGTAAGAAGAAGAAKAQ). A DNA-binding region (homeobox) is located at residues 244-303 (DKRPRTAFTAEQLQRLKAEFQANRYITEQRRQSLAQELSLNESRVKIWFQNKRAKIKKAT).

The protein belongs to the engrailed homeobox family.

It localises to the nucleus. Required for proper formation of the apical ectodermal ridge and correct dorsal-ventral patterning in the limb. The chain is Homeobox protein engrailed-1 (EN1) from Gallus gallus (Chicken).